A 303-amino-acid polypeptide reads, in one-letter code: Methionyl-tRNA formyltransferase (303 aa).

108-111 is a binding site for (6S)-5,6,7,8-tetrahydrofolate; it reads SDLP.

Belongs to the Fmt family.

The catalysed reaction is L-methionyl-tRNA(fMet) + (6R)-10-formyltetrahydrofolate = N-formyl-L-methionyl-tRNA(fMet) + (6S)-5,6,7,8-tetrahydrofolate + H(+). Attaches a formyl group to the free amino group of methionyl-tRNA(fMet). The formyl group appears to play a dual role in the initiator identity of N-formylmethionyl-tRNA by promoting its recognition by IF2 and preventing the misappropriation of this tRNA by the elongation apparatus. The protein is Methionyl-tRNA formyltransferase of Rickettsia rickettsii (strain Iowa).